A 472-amino-acid chain; its full sequence is Alanine--anticapsin ligase (472 aa).

Mg(2+) is bound at residue Glu-109. ATP contacts are provided by Lys-138 and Lys-178. One can recognise an ATP-grasp domain in the interval Arg-142–Cys-355. A Mg(2+)-binding site is contributed by Leu-182. Residues Ser-184–Ser-185, Glu-226–Leu-229, and Gln-268 each bind ATP. Residues Glu-273 and His-309 to Glu-311 contribute to the substrate site. Mg(2+) is bound by residues Glu-311 and Glu-324. A substrate-binding site is contributed by Arg-328–Gly-331.

As to quaternary structure, monomer or homodimer. Requires Mg(2+) as cofactor.

The catalysed reaction is L-anticapsin + L-alanine + ATP = bacilysin + ADP + phosphate + H(+). Its pathway is antibiotic biosynthesis; bacilysin biosynthesis. In terms of biological role, part of the bacABCDEFG operon responsible for the biosynthesis of bacilysin, an irreversible inactivator of the glutaminase domain of glucosamine synthetase. Catalyzes the formation of alpha-dipeptides from various L-amino acids in the presence of ATP. In vivo catalyzes the ligation of L-alanine and L-anticapsin (epoxycyclohexanonyl-Ala) to produce the final bacilysin antibiotic (L-Ala-L-4S-cyclohexenonyl-Ala dipeptide). The substrate specificity is restricted to small amino acids such as L-Ala, for the N-terminal end of the dipeptide, whereas a wide range of hydrophobic amino acids such as L-Phe, L-Tyr and L-Met are recognized for the C-terminal end. This chain is Alanine--anticapsin ligase, found in Bacillus subtilis (strain 168).